A 115-amino-acid polypeptide reads, in one-letter code: uncharacterized protein (115 aa).

The 46-residue stretch at 63-108 folds into the CHCH domain; the sequence is GSPCGFEFREAITCQKTNSDGEIEQGACGKELMSFMECVTRTQCFG. 2 consecutive short sequence motifs (cx9C motif) follow at residues 66-76 and 90-100; these read CGFEFREAITC and CGKELMSFMEC. Disulfide bonds link Cys-66-Cys-100 and Cys-76-Cys-90.

This is an uncharacterized protein from Caenorhabditis elegans.